We begin with the raw amino-acid sequence, 1205 residues long: cGMP-specific 3',5'-cyclic phosphodiesterase (1205 aa).

A disordered region spans residues 1-153; sequence MTDVSSPAGG…TKASTTASQQ (153 aa). Residues 18-32 are compositionally biased toward low complexity; that stretch reads TTSSSPAATTSASSS. Polar residues predominate over residues 33-48; it reads KPLTNGANKTTISTTA. The span at 62–71 shows a compositional bias: low complexity; sequence GAIPASSSSG. Over residues 83–94 the composition is skewed to polar residues; sequence SNNNRPAATNRS. Over residues 118 to 140 the composition is skewed to low complexity; it reads SSSSPSQSPSQTQASIQTQTSQQ. 2 GAF domains span residues 259-411 and 443-624; these read DIDV…GIGI and NLEC…GLGI. Positions 654-1052 constitute a PDEase domain; it reads SQDQTEKLTQ…RNWQDLAEKV (399 aa). H730 functions as the Proton donor in the catalytic mechanism. Residues H734, H770, D771, and D956 each contribute to the a divalent metal cation site. Disordered stretches follow at residues 1093 to 1122 and 1152 to 1205; these read QQSQ…TGAL and SHVS…CALL. Basic and acidic residues-rich tracts occupy residues 1098 to 1109 and 1152 to 1162; these read GSEDSHTPEHQR and SHVSEDMDDKS. Residues 1171 to 1191 are compositionally biased toward low complexity; sequence ASGSMGRMSASSSTSSAGGQM. Residues 1195 to 1205 show a composition bias toward basic residues; sequence SKKRSKLCALL. Cysteine methyl ester is present on C1202. Residue C1202 is the site of S-farnesyl cysteine attachment. A propeptide spans 1203–1205 (removed in mature form); it reads ALL.

It belongs to the cyclic nucleotide phosphodiesterase family. In terms of assembly, interacts with PrBP. A divalent metal cation serves as cofactor.

Its subcellular location is the cell membrane. The enzyme catalyses 3',5'-cyclic GMP + H2O = GMP + H(+). Has a role regulating cGMP transport in Malpighian tubule principal cells. The polypeptide is cGMP-specific 3',5'-cyclic phosphodiesterase (Drosophila sechellia (Fruit fly)).